A 364-amino-acid polypeptide reads, in one-letter code: Programmed cell death protein 2-like (364 aa).

Alanine 2 is subject to N-acetylalanine. The segment at 125–150 is disordered; the sequence is EGSQDWGSDTEETPPPPASDLGSDSN.

Over-expression suppresses AP1, CREB, NFAT, and NF-kB transcriptional activation, and delays cell cycle progression at S phase. The sequence is that of Programmed cell death protein 2-like (Pdcd2l) from Mus musculus (Mouse).